The primary structure comprises 43 residues: Potassium channel toxin gamma-KTx 4.2 (43 aa).

4 disulfides stabilise this stretch: cysteine 5–cysteine 23, cysteine 11–cysteine 34, cysteine 20–cysteine 39, and cysteine 24–cysteine 41.

The protein belongs to the ergtoxin family. Gamma-KTx 4 subfamily. In terms of tissue distribution, expressed by the venom gland.

The protein localises to the secreted. Reversibly blocks Kv11/ERG potassium channels. The polypeptide is Potassium channel toxin gamma-KTx 4.2 (Centruroides noxius (Mexican scorpion)).